A 767-amino-acid polypeptide reads, in one-letter code: Photosystem I P700 chlorophyll a apoprotein A1 (767 aa).

8 helical membrane-spanning segments follow: residues 72–95 (IFSA…FHGA), 158–181 (LMSL…FHYH), 197–221 (LNHH…HVSL), 305–323 (IAHH…GHMY), 364–387 (WHAQ…QHMY), 403–429 (IGLF…IAMI), 451–473 (ALIS…LYIH), and 548–566 (FMVH…LILL). The [4Fe-4S] cluster site is built by Cys-590 and Cys-599. 2 consecutive transmembrane segments (helical) span residues 606-627 (HVFL…HFSW) and 681-703 (TSAY…MFLF). Chlorophyll a' is bound at residue His-692. 2 residues coordinate chlorophyll a: Met-700 and Tyr-708. Phylloquinone is bound at residue Trp-709. Residues 741-761 (AVGVAHYLLGGIATTWAFFHA) traverse the membrane as a helical segment.

It belongs to the PsaA/PsaB family. In terms of assembly, the PsaA/B heterodimer binds the P700 chlorophyll special pair and subsequent electron acceptors. PSI consists of a core antenna complex that captures photons, and an electron transfer chain that converts photonic excitation into a charge separation. The cyanobacterial PSI reaction center is composed of one copy each of PsaA,B,C,D,E,F,I,J,K,L,M and X, and forms trimeric complexes. PSI electron transfer chain: 5 chlorophyll a, 1 chlorophyll a', 2 phylloquinones and 3 4Fe-4S clusters. PSI core antenna: 90 chlorophyll a, 22 carotenoids, 3 phospholipids and 1 galactolipid. P700 is a chlorophyll a/chlorophyll a' dimer, A0 is one or more chlorophyll a, A1 is one or both phylloquinones and FX is a shared 4Fe-4S iron-sulfur center. serves as cofactor.

It is found in the cellular thylakoid membrane. The enzyme catalyses reduced [plastocyanin] + hnu + oxidized [2Fe-2S]-[ferredoxin] = oxidized [plastocyanin] + reduced [2Fe-2S]-[ferredoxin]. PsaA and PsaB bind P700, the primary electron donor of photosystem I (PSI), as well as the electron acceptors A0, A1 and FX. PSI is a plastocyanin/cytochrome c6-ferredoxin oxidoreductase, converting photonic excitation into a charge separation, which transfers an electron from the donor P700 chlorophyll pair to the spectroscopically characterized acceptors A0, A1, FX, FA and FB in turn. Oxidized P700 is reduced on the lumenal side of the thylakoid membrane by plastocyanin or cytochrome c6. In Synechococcus sp. (strain WH7803), this protein is Photosystem I P700 chlorophyll a apoprotein A1.